We begin with the raw amino-acid sequence, 76 residues long: Small ribosomal subunit protein bS18 (76 aa).

The protein belongs to the bacterial ribosomal protein bS18 family. As to quaternary structure, part of the 30S ribosomal subunit. Forms a tight heterodimer with protein bS6.

Functionally, binds as a heterodimer with protein bS6 to the central domain of the 16S rRNA, where it helps stabilize the platform of the 30S subunit. The protein is Small ribosomal subunit protein bS18 of Marinobacter nauticus (strain ATCC 700491 / DSM 11845 / VT8) (Marinobacter aquaeolei).